Here is a 249-residue protein sequence, read N- to C-terminus: 5'-nucleotidase SurE (249 aa).

A divalent metal cation contacts are provided by Asp-8, Asp-9, Ser-39, and Asn-91.

This sequence belongs to the SurE nucleotidase family. A divalent metal cation is required as a cofactor.

Its subcellular location is the cytoplasm. It catalyses the reaction a ribonucleoside 5'-phosphate + H2O = a ribonucleoside + phosphate. In terms of biological role, nucleotidase that shows phosphatase activity on nucleoside 5'-monophosphates. The chain is 5'-nucleotidase SurE from Pseudomonas aeruginosa (strain UCBPP-PA14).